We begin with the raw amino-acid sequence, 340 residues long: DNA-directed RNA polymerase subunit alpha (340 aa).

The interval 1–233 (MIQDEIKVST…DLFIPLINSE (233 aa)) is alpha N-terminal domain (alpha-NTD). The segment at 265–340 (TKDVAFKHIF…IQLPKNKNYL (76 aa)) is alpha C-terminal domain (alpha-CTD).

The protein belongs to the RNA polymerase alpha chain family. In terms of assembly, in plastids the minimal PEP RNA polymerase catalytic core is composed of four subunits: alpha, beta, beta', and beta''. When a (nuclear-encoded) sigma factor is associated with the core the holoenzyme is formed, which can initiate transcription.

It localises to the plastid. The protein localises to the chloroplast. It carries out the reaction RNA(n) + a ribonucleoside 5'-triphosphate = RNA(n+1) + diphosphate. In terms of biological role, DNA-dependent RNA polymerase catalyzes the transcription of DNA into RNA using the four ribonucleoside triphosphates as substrates. The protein is DNA-directed RNA polymerase subunit alpha of Marchantia polymorpha (Common liverwort).